The following is a 215-amino-acid chain: Cytochrome b6 (215 aa).

Residues 32-52 form a helical membrane-spanning segment; that stretch reads IFYCLGGITLTCFLVQVATGF. A heme c-binding site is contributed by Cys35. Heme b is bound by residues His86 and His100. The next 3 helical transmembrane spans lie at 90–110, 116–136, and 186–206; these read ASMM…TGGF, LTWV…VTGY, and LHTF…FPMI. Residues His187 and His202 each contribute to the heme b site.

This sequence belongs to the cytochrome b family. PetB subfamily. As to quaternary structure, the 4 large subunits of the cytochrome b6-f complex are cytochrome b6, subunit IV (17 kDa polypeptide, PetD), cytochrome f and the Rieske protein, while the 4 small subunits are PetG, PetL, PetM and PetN. The complex functions as a dimer. Requires heme b as cofactor. Heme c is required as a cofactor.

The protein localises to the plastid. It localises to the chloroplast thylakoid membrane. In terms of biological role, component of the cytochrome b6-f complex, which mediates electron transfer between photosystem II (PSII) and photosystem I (PSI), cyclic electron flow around PSI, and state transitions. The polypeptide is Cytochrome b6 (Nicotiana tomentosiformis (Tobacco)).